We begin with the raw amino-acid sequence, 127 residues long: Lymphocyte antigen 6D (127 aa).

The first 20 residues, 1–20, serve as a signal peptide directing secretion; it reads MKTALLVLLVLAVATSPAWA. The region spanning 21–108 is the UPAR/Ly6 domain; sequence LRCHVCTNSA…AAPGHALLSS (88 aa). Intrachain disulfides connect Cys-23–Cys-45, Cys-26–Cys-32, Cys-38–Cys-63, Cys-67–Cys-86, and Cys-87–Cys-92. Residue Ser-98 is the site of GPI-anchor amidated serine attachment. Residues 99-127 constitute a propeptide, removed in mature form; the sequence is AAPGHALLSSVTLGLATSLSLLTVMALCL.

Lymphoid cells lacking Ly6d, called ALP (all-lymphoid progenitor), retain full lymphoid potential and early thymic seeding activity, whereas cells containing Ly6d, called BLP (B-cell-biased lymphoid progenitor), up-regulate the B-cell specifying factors Ebf1 and Pax5 and behave essentially as B-cell progenitors (at protein level). Thymocytes and B-cells.

It is found in the cell membrane. In terms of biological role, may act as a specification marker at earliest stage specification of lymphocytes between B- and T-cell development. Marks the earliest stage of B-cell specification. This chain is Lymphocyte antigen 6D (Ly6d), found in Mus musculus (Mouse).